A 179-amino-acid polypeptide reads, in one-letter code: Translation initiation factor IF-3 (179 aa).

The protein belongs to the IF-3 family. Monomer.

The protein resides in the cytoplasm. Functionally, IF-3 binds to the 30S ribosomal subunit and shifts the equilibrium between 70S ribosomes and their 50S and 30S subunits in favor of the free subunits, thus enhancing the availability of 30S subunits on which protein synthesis initiation begins. In Proteus hauseri, this protein is Translation initiation factor IF-3.